The sequence spans 96 residues: Putative pterin-4-alpha-carbinolamine dehydratase (96 aa).

It belongs to the pterin-4-alpha-carbinolamine dehydratase family.

The catalysed reaction is (4aS,6R)-4a-hydroxy-L-erythro-5,6,7,8-tetrahydrobiopterin = (6R)-L-erythro-6,7-dihydrobiopterin + H2O. In Brucella anthropi (strain ATCC 49188 / DSM 6882 / CCUG 24695 / JCM 21032 / LMG 3331 / NBRC 15819 / NCTC 12168 / Alc 37) (Ochrobactrum anthropi), this protein is Putative pterin-4-alpha-carbinolamine dehydratase.